The chain runs to 507 residues: ATP synthase subunit alpha (507 aa).

168–175 (GDRQTGKT) serves as a coordination point for ATP.

The protein belongs to the ATPase alpha/beta chains family. F-type ATPases have 2 components, CF(1) - the catalytic core - and CF(0) - the membrane proton channel. CF(1) has five subunits: alpha(3), beta(3), gamma(1), delta(1), epsilon(1). CF(0) has three main subunits: a(1), b(2) and c(9-12). The alpha and beta chains form an alternating ring which encloses part of the gamma chain. CF(1) is attached to CF(0) by a central stalk formed by the gamma and epsilon chains, while a peripheral stalk is formed by the delta and b chains.

It localises to the cell membrane. It catalyses the reaction ATP + H2O + 4 H(+)(in) = ADP + phosphate + 5 H(+)(out). Produces ATP from ADP in the presence of a proton gradient across the membrane. The alpha chain is a regulatory subunit. This Mesomycoplasma hyopneumoniae (strain 7448) (Mycoplasma hyopneumoniae) protein is ATP synthase subunit alpha.